A 78-amino-acid chain; its full sequence is Sec-independent protein translocase protein TatA (78 aa).

A helical transmembrane segment spans residues 1–21 (MGGISIWQLLIVALIVVLLFG). The interval 40–78 (KSAMSSEEEKKAIEDSASEKTAQTEEKKTESKDKDKEQV) is disordered. Residues 46-78 (EEEKKAIEDSASEKTAQTEEKKTESKDKDKEQV) show a composition bias toward basic and acidic residues.

This sequence belongs to the TatA/E family. The Tat system comprises two distinct complexes: a TatABC complex, containing multiple copies of TatA, TatB and TatC subunits, and a separate TatA complex, containing only TatA subunits. Substrates initially bind to the TatABC complex, which probably triggers association of the separate TatA complex to form the active translocon.

Its subcellular location is the cell inner membrane. Part of the twin-arginine translocation (Tat) system that transports large folded proteins containing a characteristic twin-arginine motif in their signal peptide across membranes. TatA could form the protein-conducting channel of the Tat system. This chain is Sec-independent protein translocase protein TatA, found in Shewanella sediminis (strain HAW-EB3).